A 161-amino-acid polypeptide reads, in one-letter code: DNA-directed RNA polymerase 18 kDa subunit (161 aa).

The protein belongs to the poxviridae DNA-directed RNA polymerase 18 kDa subunit family. As to quaternary structure, the DNA-dependent RNA polymerase used for intermediate and late genes expression consists of eight subunits Rpo30/OPG66, Rpo7/OPG90, Rpo22/OPG103, Rpo147/OPG105, Rpo18/OPG119, Rpo19/OPG131, Rpo132/OPG151 and Rpo35/OPG156. The same holoenzyme, with the addition of the transcription-specificity factor OPG109, is used for early gene expression. Apparently non-glycosylated.

It is found in the virion. The enzyme catalyses RNA(n) + a ribonucleoside 5'-triphosphate = RNA(n+1) + diphosphate. Functionally, part of the DNA-dependent RNA polymerase which catalyzes the transcription of viral DNA into RNA using the four ribonucleoside triphosphates as substrates. Responsible for the transcription of early, intermediate and late genes. DNA-dependent RNA polymerase associates with the early transcription factor (ETF), itself composed of OPG118 and OPG133, thereby allowing the early genes transcription. Late transcription, and probably also intermediate transcription, require newly synthesized RNA polymerase. This is DNA-directed RNA polymerase 18 kDa subunit (OPG119) from Cynomys gunnisoni (Gunnison's prairie dog).